The chain runs to 361 residues: Anhydro-N-acetylmuramic acid kinase (361 aa).

ATP is bound at residue 10–17 (GTSLDGVD).

The protein belongs to the anhydro-N-acetylmuramic acid kinase family.

The catalysed reaction is 1,6-anhydro-N-acetyl-beta-muramate + ATP + H2O = N-acetyl-D-muramate 6-phosphate + ADP + H(+). It participates in amino-sugar metabolism; 1,6-anhydro-N-acetylmuramate degradation. It functions in the pathway cell wall biogenesis; peptidoglycan recycling. Its function is as follows. Catalyzes the specific phosphorylation of 1,6-anhydro-N-acetylmuramic acid (anhMurNAc) with the simultaneous cleavage of the 1,6-anhydro ring, generating MurNAc-6-P. Is required for the utilization of anhMurNAc either imported from the medium or derived from its own cell wall murein, and thus plays a role in cell wall recycling. This Gluconobacter oxydans (strain 621H) (Gluconobacter suboxydans) protein is Anhydro-N-acetylmuramic acid kinase.